A 455-amino-acid polypeptide reads, in one-letter code: Bifunctional protein GlmU (455 aa).

The interval 1-228 (MYKCALVLAA…FEETIGVNSR (228 aa)) is pyrophosphorylase. Residues 8-11 (LAAG), Lys22, Gln73, and 78-79 (GT) contribute to the UDP-N-acetyl-alpha-D-glucosamine site. Asp103 contributes to the Mg(2+) binding site. UDP-N-acetyl-alpha-D-glucosamine is bound by residues Gly140, Glu154, Asn169, and Asn226. Asn226 provides a ligand contact to Mg(2+). The linker stretch occupies residues 229–249 (AQLAQAEEILKDRINLKHMEN). The N-acetyltransferase stretch occupies residues 250-455 (GVTLIDPKTT…GWVDKKGLKK (206 aa)). UDP-N-acetyl-alpha-D-glucosamine is bound by residues Arg331 and Lys349. His361 serves as the catalytic Proton acceptor. Positions 364 and 375 each coordinate UDP-N-acetyl-alpha-D-glucosamine. Residues 384-385 (NY), Ala421, and Arg438 each bind acetyl-CoA.

In the N-terminal section; belongs to the N-acetylglucosamine-1-phosphate uridyltransferase family. This sequence in the C-terminal section; belongs to the transferase hexapeptide repeat family. As to quaternary structure, homotrimer. Mg(2+) is required as a cofactor.

The protein localises to the cytoplasm. It carries out the reaction alpha-D-glucosamine 1-phosphate + acetyl-CoA = N-acetyl-alpha-D-glucosamine 1-phosphate + CoA + H(+). It catalyses the reaction N-acetyl-alpha-D-glucosamine 1-phosphate + UTP + H(+) = UDP-N-acetyl-alpha-D-glucosamine + diphosphate. It functions in the pathway nucleotide-sugar biosynthesis; UDP-N-acetyl-alpha-D-glucosamine biosynthesis; N-acetyl-alpha-D-glucosamine 1-phosphate from alpha-D-glucosamine 6-phosphate (route II): step 2/2. Its pathway is nucleotide-sugar biosynthesis; UDP-N-acetyl-alpha-D-glucosamine biosynthesis; UDP-N-acetyl-alpha-D-glucosamine from N-acetyl-alpha-D-glucosamine 1-phosphate: step 1/1. The protein operates within bacterial outer membrane biogenesis; LPS lipid A biosynthesis. In terms of biological role, catalyzes the last two sequential reactions in the de novo biosynthetic pathway for UDP-N-acetylglucosamine (UDP-GlcNAc). The C-terminal domain catalyzes the transfer of acetyl group from acetyl coenzyme A to glucosamine-1-phosphate (GlcN-1-P) to produce N-acetylglucosamine-1-phosphate (GlcNAc-1-P), which is converted into UDP-GlcNAc by the transfer of uridine 5-monophosphate (from uridine 5-triphosphate), a reaction catalyzed by the N-terminal domain. This chain is Bifunctional protein GlmU, found in Clostridium botulinum (strain Eklund 17B / Type B).